The following is a 386-amino-acid chain: Acetylornithine aminotransferase (386 aa).

Residues 96-97 (GA) and Phe123 contribute to the pyridoxal 5'-phosphate site. Arg126 lines the N(2)-acetyl-L-ornithine pocket. Residue 208 to 211 (DEVQ) coordinates pyridoxal 5'-phosphate. Position 237 is an N6-(pyridoxal phosphate)lysine (Lys237). Residue Ser265 coordinates N(2)-acetyl-L-ornithine. Thr266 is a binding site for pyridoxal 5'-phosphate.

It belongs to the class-III pyridoxal-phosphate-dependent aminotransferase family. ArgD subfamily. As to quaternary structure, homodimer. It depends on pyridoxal 5'-phosphate as a cofactor.

It localises to the cytoplasm. It catalyses the reaction N(2)-acetyl-L-ornithine + 2-oxoglutarate = N-acetyl-L-glutamate 5-semialdehyde + L-glutamate. It functions in the pathway amino-acid biosynthesis; L-arginine biosynthesis; N(2)-acetyl-L-ornithine from L-glutamate: step 4/4. The sequence is that of Acetylornithine aminotransferase from Bacillus cereus (strain ATCC 14579 / DSM 31 / CCUG 7414 / JCM 2152 / NBRC 15305 / NCIMB 9373 / NCTC 2599 / NRRL B-3711).